We begin with the raw amino-acid sequence, 191 residues long: Peptidyl-tRNA hydrolase (191 aa).

Tyr14 lines the tRNA pocket. His19 functions as the Proton acceptor in the catalytic mechanism. Tyr64, Asn66, and Asn112 together coordinate tRNA.

It belongs to the PTH family. Monomer.

Its subcellular location is the cytoplasm. It catalyses the reaction an N-acyl-L-alpha-aminoacyl-tRNA + H2O = an N-acyl-L-amino acid + a tRNA + H(+). Functionally, hydrolyzes ribosome-free peptidyl-tRNAs (with 1 or more amino acids incorporated), which drop off the ribosome during protein synthesis, or as a result of ribosome stalling. In terms of biological role, catalyzes the release of premature peptidyl moieties from peptidyl-tRNA molecules trapped in stalled 50S ribosomal subunits, and thus maintains levels of free tRNAs and 50S ribosomes. This Syntrophotalea carbinolica (strain DSM 2380 / NBRC 103641 / GraBd1) (Pelobacter carbinolicus) protein is Peptidyl-tRNA hydrolase.